Here is a 433-residue protein sequence, read N- to C-terminus: Homogentisate 1,2-dioxygenase (433 aa).

Histidine 288 (proton acceptor) is an active-site residue. Fe cation-binding residues include histidine 331 and glutamate 337. 2 residues coordinate homogentisate: tyrosine 346 and histidine 367. Histidine 367 contacts Fe cation.

Belongs to the homogentisate dioxygenase family. As to quaternary structure, hexamer; dimer of trimers. The cofactor is Fe cation.

It catalyses the reaction homogentisate + O2 = 4-maleylacetoacetate + H(+). It functions in the pathway amino-acid degradation; L-phenylalanine degradation; acetoacetate and fumarate from L-phenylalanine: step 4/6. Its function is as follows. Involved in the catabolism of homogentisate (2,5-dihydroxyphenylacetate or 2,5-OH-PhAc), a central intermediate in the degradation of phenylalanine and tyrosine. Catalyzes the oxidative ring cleavage of the aromatic ring of homogentisate to yield maleylacetoacetate. This Pseudomonas putida (strain GB-1) protein is Homogentisate 1,2-dioxygenase.